Consider the following 393-residue polypeptide: S-adenosylmethionine synthase (393 aa).

His-16 provides a ligand contact to ATP. Asp-18 serves as a coordination point for Mg(2+). Glu-44 is a K(+) binding site. L-methionine is bound by residues Glu-57 and Gln-100. Residues Gln-100–Gln-110 form a flexible loop region. ATP contacts are provided by residues Asp-167–Lys-169, Arg-238–Phe-239, Asp-247, Arg-253–Lys-254, Ala-270, and Lys-274. Asp-247 serves as a coordination point for L-methionine. Lys-278 provides a ligand contact to L-methionine.

The protein belongs to the AdoMet synthase family. Homotetramer; dimer of dimers. Requires Mg(2+) as cofactor. K(+) is required as a cofactor.

It is found in the cytoplasm. It catalyses the reaction L-methionine + ATP + H2O = S-adenosyl-L-methionine + phosphate + diphosphate. It participates in amino-acid biosynthesis; S-adenosyl-L-methionine biosynthesis; S-adenosyl-L-methionine from L-methionine: step 1/1. Catalyzes the formation of S-adenosylmethionine (AdoMet) from methionine and ATP. The overall synthetic reaction is composed of two sequential steps, AdoMet formation and the subsequent tripolyphosphate hydrolysis which occurs prior to release of AdoMet from the enzyme. The protein is S-adenosylmethionine synthase of Methylibium petroleiphilum (strain ATCC BAA-1232 / LMG 22953 / PM1).